A 147-amino-acid chain; its full sequence is Orcokinin peptides (147 aa).

An N-terminal signal peptide occupies residues 1-27; that stretch reads MPRHSVFALSILALSITATVWIPTVQA. Propeptides lie at residues 28 to 89 and 146 to 147; these read ETNL…ERFG and FG.

It belongs to the orcokinin family.

Its subcellular location is the secreted. In terms of biological role, myotropic peptides. This Apis mellifera (Honeybee) protein is Orcokinin peptides.